The chain runs to 202 residues: Superoxide dismutase [Mn/Fe] (202 aa).

4 residues coordinate Fe(3+): His27, His81, Asp163, and His167. Positions 27, 81, 163, and 167 each coordinate Mn(2+).

The protein belongs to the iron/manganese superoxide dismutase family. Mn(2+) is required as a cofactor. It depends on Fe(3+) as a cofactor.

The enzyme catalyses 2 superoxide + 2 H(+) = H2O2 + O2. Functionally, destroys superoxide anion radicals which are normally produced within the cells and which are toxic to biological systems. Catalyzes the dismutation of superoxide anion radicals into O2 and H2O2 by successive reduction and oxidation of the transition metal ion at the active site. The protein is Superoxide dismutase [Mn/Fe] (sodA) of Streptococcus agalactiae serotype V (strain ATCC BAA-611 / 2603 V/R).